We begin with the raw amino-acid sequence, 20 residues long: Superoxide dismutase [Fe] (20 aa).

The protein belongs to the iron/manganese superoxide dismutase family. As to quaternary structure, homodimer. The cofactor is Fe cation.

It localises to the periplasm. The enzyme catalyses 2 superoxide + 2 H(+) = H2O2 + O2. Destroys superoxide anion radicals which are normally produced within the cells and which are toxic to biological systems. The polypeptide is Superoxide dismutase [Fe] (sodB) (Photobacterium damsela subsp. piscicida (Pasteurella piscicida)).